The primary structure comprises 56 residues: Large ribosomal subunit protein bL33 (56 aa).

This sequence belongs to the bacterial ribosomal protein bL33 family.

The protein is Large ribosomal subunit protein bL33 of Ehrlichia canis (strain Jake).